Here is a 107-residue protein sequence, read N- to C-terminus: MIYLYLLCAIFAEVVATSLLKSTEGFTRLWPTVGCLVGYGIAFALLALSISHGMQTDVAYALWSAIGTAAIVLVAVLFLGSPISVMKVVGVGLIVVGVVTLNLAGAH.

The next 4 membrane-spanning stretches (helical) occupy residues 2–19 (IYLY…ATSL), 29–51 (LWPT…LSIS), 58–80 (VAYA…LFLG), and 84–106 (SVMK…LAGA).

The protein belongs to the drug/metabolite transporter (DMT) superfamily. Small multidrug resistance (SMR) (TC 2.A.7.1) family. Mmr subfamily.

It localises to the cell membrane. Its function is as follows. Multidrug efflux pump. Confers resistance to tetraphenylphosphonium (TPP), erythromycin, ethidium bromide, acriflavine, safranin O and pyronin Y. In Mycobacterium bovis (strain ATCC BAA-935 / AF2122/97), this protein is Multidrug resistance protein mmr (mmr).